Consider the following 100-residue polypeptide: Glutamyl-tRNA(Gln) amidotransferase subunit C (100 aa).

It belongs to the GatC family. In terms of assembly, heterotrimer of A, B and C subunits.

The catalysed reaction is L-glutamyl-tRNA(Gln) + L-glutamine + ATP + H2O = L-glutaminyl-tRNA(Gln) + L-glutamate + ADP + phosphate + H(+). It catalyses the reaction L-aspartyl-tRNA(Asn) + L-glutamine + ATP + H2O = L-asparaginyl-tRNA(Asn) + L-glutamate + ADP + phosphate + 2 H(+). Its function is as follows. Allows the formation of correctly charged Asn-tRNA(Asn) or Gln-tRNA(Gln) through the transamidation of misacylated Asp-tRNA(Asn) or Glu-tRNA(Gln) in organisms which lack either or both of asparaginyl-tRNA or glutaminyl-tRNA synthetases. The reaction takes place in the presence of glutamine and ATP through an activated phospho-Asp-tRNA(Asn) or phospho-Glu-tRNA(Gln). The protein is Glutamyl-tRNA(Gln) amidotransferase subunit C of Streptococcus pyogenes serotype M1.